Consider the following 239-residue polypeptide: MGRKWNNIKEKKAQKDKNTSRIYAKFGKEIYVAAKSGEPDPESNQNLRLVLERAKTYNVPRNIIDRAIDKAKGSDDENYDNLRYEGFGPNGSMLIVDALTNNVNRTASDVRAAFGKNGGNMGVSGSVSYMFDHTATFAFEGKSADEILEVLMEQDLDVRDVVDDGNLTIVYAEPDQFAQVQDALRQDGVEDFQVAEFEMLPQNDIQLSDEDKATLEGLIDALEDLEDVQNVYHNVDLDS.

The protein belongs to the TACO1 family. YeeN subfamily.

It is found in the cytoplasm. The sequence is that of Probable transcriptional regulatory protein Sca_0317 from Staphylococcus carnosus (strain TM300).